A 329-amino-acid chain; its full sequence is MTVQGVKFSGVGAATPRQCLTNAHLSALVDTSDEWIQSRTGIQERHVAAPDQRLVDLASEAAGAALQMAGLDPTAVDLIILATSTPDDLFGTACLVQTRIGAVNAVAFDLTAACSGFLFALVTAAQYLRTGAYRSALVVGGDILSRWVDWGDRRTCILFGDGAGAMVLQASDVDQLLSFELRSDGRLNEHLTLAFAGTPQTLGENLAIAQGGFAPITMNGREVYRFAVTQVPEVIEKALHRAGCTVEEIDWLVLHQANQRILDAVAERLGIPQEKVISNVGQCGNTSAASIPLALSKPIQQGHIQPGDLIATAGFGAGLTWGAALFRWQ.

Catalysis depends on residues C114 and H255. Positions 256-260 (QANQR) are ACP-binding. The active site involves N285.

Belongs to the thiolase-like superfamily. FabH family. Homodimer.

The protein resides in the cytoplasm. The enzyme catalyses malonyl-[ACP] + acetyl-CoA + H(+) = 3-oxobutanoyl-[ACP] + CO2 + CoA. It participates in lipid metabolism; fatty acid biosynthesis. Catalyzes the condensation reaction of fatty acid synthesis by the addition to an acyl acceptor of two carbons from malonyl-ACP. Catalyzes the first condensation reaction which initiates fatty acid synthesis and may therefore play a role in governing the total rate of fatty acid production. Possesses both acetoacetyl-ACP synthase and acetyl transacylase activities. Its substrate specificity determines the biosynthesis of branched-chain and/or straight-chain of fatty acids. The chain is Beta-ketoacyl-[acyl-carrier-protein] synthase III from Thermosynechococcus vestitus (strain NIES-2133 / IAM M-273 / BP-1).